The following is a 453-amino-acid chain: Bifunctional protein GlmU (453 aa).

A pyrophosphorylase region spans residues 1–226; sequence MKFSAVILAA…PIEVEGVNDR (226 aa). UDP-N-acetyl-alpha-D-glucosamine is bound by residues 8–11, lysine 22, glutamine 73, 78–79, 100–102, glycine 137, glutamate 151, asparagine 166, and asparagine 224; these read LAAG, GT, and YGD. Aspartate 102 provides a ligand contact to Mg(2+). Position 224 (asparagine 224) interacts with Mg(2+). Positions 227–247 are linker; sequence AQLARLERAFQAAQAKKLLEQ. The N-acetyltransferase stretch occupies residues 248-453; sequence GVMLRDPARF…TGWQRPVKKK (206 aa). UDP-N-acetyl-alpha-D-glucosamine-binding residues include arginine 330 and lysine 348. Histidine 360 (proton acceptor) is an active-site residue. 2 residues coordinate UDP-N-acetyl-alpha-D-glucosamine: tyrosine 363 and asparagine 374. Acetyl-CoA is bound by residues alanine 377, 383–384, serine 402, alanine 420, and arginine 437; that span reads NY.

In the N-terminal section; belongs to the N-acetylglucosamine-1-phosphate uridyltransferase family. It in the C-terminal section; belongs to the transferase hexapeptide repeat family. In terms of assembly, homotrimer. The cofactor is Mg(2+).

It is found in the cytoplasm. The catalysed reaction is alpha-D-glucosamine 1-phosphate + acetyl-CoA = N-acetyl-alpha-D-glucosamine 1-phosphate + CoA + H(+). The enzyme catalyses N-acetyl-alpha-D-glucosamine 1-phosphate + UTP + H(+) = UDP-N-acetyl-alpha-D-glucosamine + diphosphate. It functions in the pathway nucleotide-sugar biosynthesis; UDP-N-acetyl-alpha-D-glucosamine biosynthesis; N-acetyl-alpha-D-glucosamine 1-phosphate from alpha-D-glucosamine 6-phosphate (route II): step 2/2. It participates in nucleotide-sugar biosynthesis; UDP-N-acetyl-alpha-D-glucosamine biosynthesis; UDP-N-acetyl-alpha-D-glucosamine from N-acetyl-alpha-D-glucosamine 1-phosphate: step 1/1. The protein operates within bacterial outer membrane biogenesis; LPS lipid A biosynthesis. Functionally, catalyzes the last two sequential reactions in the de novo biosynthetic pathway for UDP-N-acetylglucosamine (UDP-GlcNAc). The C-terminal domain catalyzes the transfer of acetyl group from acetyl coenzyme A to glucosamine-1-phosphate (GlcN-1-P) to produce N-acetylglucosamine-1-phosphate (GlcNAc-1-P), which is converted into UDP-GlcNAc by the transfer of uridine 5-monophosphate (from uridine 5-triphosphate), a reaction catalyzed by the N-terminal domain. This Vibrio vulnificus (strain CMCP6) protein is Bifunctional protein GlmU.